The chain runs to 228 residues: Ribose-5-phosphate isomerase A (228 aa).

Substrate-binding positions include 27 to 30 (TGTT), 86 to 89 (DGAD), and 100 to 103 (KGGG). The active-site Proton acceptor is the glutamate 109. Lysine 127 contributes to the substrate binding site.

It belongs to the ribose 5-phosphate isomerase family. In terms of assembly, homodimer.

It catalyses the reaction aldehydo-D-ribose 5-phosphate = D-ribulose 5-phosphate. It functions in the pathway carbohydrate degradation; pentose phosphate pathway; D-ribose 5-phosphate from D-ribulose 5-phosphate (non-oxidative stage): step 1/1. Functionally, catalyzes the reversible conversion of ribose-5-phosphate to ribulose 5-phosphate. The chain is Ribose-5-phosphate isomerase A from Borrelia hermsii (strain HS1 / DAH).